Consider the following 208-residue polypeptide: N-(5'-phosphoribosyl)anthranilate isomerase (208 aa).

Belongs to the TrpF family.

It catalyses the reaction N-(5-phospho-beta-D-ribosyl)anthranilate = 1-(2-carboxyphenylamino)-1-deoxy-D-ribulose 5-phosphate. It participates in amino-acid biosynthesis; L-tryptophan biosynthesis; L-tryptophan from chorismate: step 3/5. The polypeptide is N-(5'-phosphoribosyl)anthranilate isomerase (Methanococcus maripaludis (strain C5 / ATCC BAA-1333)).